The primary structure comprises 111 residues: Histone H2A-Bbd type 1 (111 aa).

Belongs to the histone H2A family. In terms of assembly, the nucleosome is a histone octamer containing two molecules each of H2A, H2B, H3 and H4 assembled in one H3-H4 heterotetramer and two H2A-H2B heterodimers. Incorporated into nucleosomes during late spermatogenesis. Interacts with H2BC1/TH2B; preferentially dimerizes with H2BC1/TH2B to form nucleosomes. As to expression, highly expressed in adult testis, mainly in spermatocytes.

Its subcellular location is the nucleus. The protein resides in the chromosome. Its function is as follows. Atypical histone H2A which replaces conventional H2A during late spermatogenesis and is involved in the replacement of histones to protamine in male germ cells. Core component of nucleosome: nucleosomes wrap and compact DNA into chromatin, limiting DNA accessibility to the cellular machineries which require DNA as a template. Nucleosomes containing H2AB1 only wrap 130 bp of DNA, compared to 147 bp for classical nucleosomes. In condensing spermatids, the heterodimer between H2AB1 and H2BC1/TH2B is loaded onto the nucleosomes and promotes loading of transition proteins (TNP1 and TNP2) onto the nucleosomes. Inclusion of the H2AB1-H2BC1/TH2B dimer into chromatin opens the nucleosomes, releasing the nucleosomal DNA ends and allowing the invasion of nucleosomes by transition proteins (TNP1 and TNP2). Then, transition proteins drive the recruitment and processing of protamines, which are responsible for histone eviction. In Mus musculus (Mouse), this protein is Histone H2A-Bbd type 1 (H2ab1).